The chain runs to 334 residues: Zinc-finger homeodomain protein 10 (334 aa).

Residues 1 to 15 (MMDMTPTITTTTTPT) are compositionally biased toward low complexity. Disordered stretches follow at residues 1 to 33 (MMDMTPTITTTTTPTPKSPEPESETPTRIQPAK) and 103 to 164 (FHRR…LLSL). The segment at 56–107 (YKECLKNHAAALGGHALDGCGEFMPSPSSISSDPTSLKCAACGCHRNFHRRD) adopts a ZF-HD dimerization-type; degenerate zinc-finger fold. Residues 136-155 (PPPPPPPPPRSPNSASPPPI) are compositionally biased toward pro residues. The homeobox DNA-binding region spans 200 to 263 (RKRFRTKFSQ…NNKNTFNRRD (64 aa)). Residues 292–334 (NGHHGVGGGGELHQSVSSGGGGGGFDSDSGGANGGNVNGSSSS) form a disordered region. Residues 309–328 (SGGGGGGFDSDSGGANGGNV) are compositionally biased toward gly residues.

In terms of assembly, homo- and heterodimer with other ZFHD proteins. Interacts with MIF1, MIF2 and MIF3; these interactions prevent nuclear localization and DNA-binding to inhibit transcription regulation activity. Binds to ZHD1, ZHD2, ZHD4, ZHD5, ZHD6, ZHD7 and ZHD8. Interacts with KIN10 and KIN11. Mostly expressed in rosettes (e.g. young leaves), flowers (e.g. styles), siliques and inflorescence.

The protein resides in the nucleus. In terms of biological role, putative transcription factor. Probably involved in establishing polarity during leaf development through the gibberellic acid (GA) signaling pathway. In Arabidopsis thaliana (Mouse-ear cress), this protein is Zinc-finger homeodomain protein 10 (ZHD10).